A 911-amino-acid chain; its full sequence is Protein dead ringer (911 aa).

3 disordered regions span residues 1 to 44, 67 to 87, and 172 to 274; these read MQLR…DCDS, SGGGGSFASPEPQTELPLSHH, and HVTS…QNNG. Residues 19–34 show a composition bias toward basic and acidic residues; that stretch reads IERDSDLGDDLSHGDR. Serine 30 bears the Phosphoserine mark. Threonine 35 is modified (phosphothreonine). Serine 44 is subject to Phosphoserine. Low complexity predominate over residues 174–201; sequence TSSPSGGNGSSYNGGTTPTNSSNSNATT. Residues 202 to 231 are compositionally biased toward gly residues; sequence NGGGTAGPGGTGGSGGGGGGGGGGGGGVGG. Residues 252-273 show a composition bias toward low complexity; sequence AANSASNSSTSSEASNSSQQNN. The ARID domain maps to 293-385; the sequence is DPKRKEFLDD…YLYPYECEKK (93 aa). Disordered regions lie at residues 501–633, 662–775, and 826–877; these read GMPP…VGSG, PSMG…GKLN, and QSET…DQDM. The span at 512–550 shows a compositional bias: low complexity; sequence HQQQHSQQQQQQQHHHQQQQQQQSQQQHHLQQQRQRSQS. Residues 570–600 show a composition bias toward polar residues; the sequence is HNNNSPPGSAHTSPQQREALNLSDSPPNLTN. Serine 592 and serine 594 each carry phosphoserine. Positions 601-621 are enriched in basic and acidic residues; sequence IKREREREPTPEPVDQDDKFV. Serine 720 carries the post-translational modification Phosphoserine. Residues 731–825 enclose the REKLES domain; it reads TTGGSVGHRH…GVLVANVPLS (95 aa). The span at 737-751 shows a compositional bias: basic residues; it reads GHRHSSPVSTKKKGG. The span at 841–853 shows a compositional bias: acidic residues; that stretch reads TVEEEKDEEEEEE. A compositionally biased stretch (basic and acidic residues) spans 854-870; the sequence is PKAAEEESHRSPVKQEN.

In terms of tissue distribution, present in the pharyngeal muscles, hindgut epithelium, amnioserosa, ring gland, midgut-hindgut junction, posterior region of each brain lobe, longitudinal glial cells of the CNS and the salivary gland duct of germ-band retracted embryos.

The protein localises to the nucleus. Its function is as follows. Transcription factor which is a downstream target of gcm and repo. Directly or indirectly activates the transcription of locos and pros, which are essential for the development of some glial cells. Plays an essential role in defining the cell shape and migration characteristics of longitudinal glia that enable them to establish a normal axon scaffold. This is Protein dead ringer (retn) from Drosophila melanogaster (Fruit fly).